A 60-amino-acid polypeptide reads, in one-letter code: Phycobilisome degradation protein NblA homolog 2 (60 aa).

This sequence to Synechococcus PCC 7942 NblA and some, to chloroplast ycf18.

In Synechocystis sp. (strain ATCC 27184 / PCC 6803 / Kazusa), this protein is Phycobilisome degradation protein NblA homolog 2.